We begin with the raw amino-acid sequence, 169 residues long: Crossover junction endodeoxyribonuclease RuvC (169 aa).

Residues Asp-7, Glu-67, and Asp-140 contribute to the active site. Mg(2+) is bound by residues Asp-7, Glu-67, and Asp-140.

This sequence belongs to the RuvC family. In terms of assembly, homodimer which binds Holliday junction (HJ) DNA. The HJ becomes 2-fold symmetrical on binding to RuvC with unstacked arms; it has a different conformation from HJ DNA in complex with RuvA. In the full resolvosome a probable DNA-RuvA(4)-RuvB(12)-RuvC(2) complex forms which resolves the HJ. The cofactor is Mg(2+).

Its subcellular location is the cytoplasm. It catalyses the reaction Endonucleolytic cleavage at a junction such as a reciprocal single-stranded crossover between two homologous DNA duplexes (Holliday junction).. In terms of biological role, the RuvA-RuvB-RuvC complex processes Holliday junction (HJ) DNA during genetic recombination and DNA repair. Endonuclease that resolves HJ intermediates. Cleaves cruciform DNA by making single-stranded nicks across the HJ at symmetrical positions within the homologous arms, yielding a 5'-phosphate and a 3'-hydroxyl group; requires a central core of homology in the junction. The consensus cleavage sequence is 5'-(A/T)TT(C/G)-3'. Cleavage occurs on the 3'-side of the TT dinucleotide at the point of strand exchange. HJ branch migration catalyzed by RuvA-RuvB allows RuvC to scan DNA until it finds its consensus sequence, where it cleaves and resolves the cruciform DNA. This is Crossover junction endodeoxyribonuclease RuvC from Clostridioides difficile (strain 630) (Peptoclostridium difficile).